Consider the following 408-residue polypeptide: MINALKGMKDLLDKDAYYYEKVIQTCEEVVKNYGFTFINTPHLELCILFKRSVGESSDIVGKEMYEFIDKGENHVCMRPEGTAGVVRAYIEKKLDKNTSVKRWFYHGSMFRYERPQKGRLREFHQFGVESFGNASVYEDASIILMLVEIFSRLDIKFKLLINSLGCLECMPKYRENLIHFLDSKEGFCEDCLRRKNLNPIRVLDCKNEHCQSLLNDAPLLNQNLCSSCQKDFEILQSVLKENGVDFEVDSKLVRGLDYYSKTAFEFISDEIGAKAAIAGGGRYDRLIEYLDGKSGFGIGFAMGIERIIAILEQKEEKVQREGIYLCAMDKIYIQKLLHIATNLRKEHKVLLSYEARKLAKHLENADKNNAEIFLCMGENEVQNESLFYKNLVKKEEKMIKISDLKKVL.

The protein belongs to the class-II aminoacyl-tRNA synthetase family. Homodimer.

It localises to the cytoplasm. The catalysed reaction is tRNA(His) + L-histidine + ATP = L-histidyl-tRNA(His) + AMP + diphosphate + H(+). The chain is Histidine--tRNA ligase from Campylobacter jejuni subsp. doylei (strain ATCC BAA-1458 / RM4099 / 269.97).